A 284-amino-acid chain; its full sequence is MPAAISRNWPAPAKLNLFLHINGRRADGYHELQTLFQFIDCCDMLDFKVTETPELILHSNMSGVVADSDNLILRAAKSLQQTTGFNGGAEIWLDKRLPMGGGLGGGSSDAATTLVALNKLWHTQLSTEELAKIGLKLGADIPVFIHGFAAFAEGVGERLQAVNPGEPWYLVIAPDAHVSTADVFQDPLLPRDTPKLAIDTLMSQPWANDCQKLVVSKYPQVAKALGWLLEYAPSRMTGTGACVFGEFTQQQQALAALAKLPSEMQGFVAQGMNLSPLITRLSHP.

Lys14 is a catalytic residue. ATP is bound at residue 98 to 108 (PMGGGLGGGSS). The active site involves Asp140.

It belongs to the GHMP kinase family. IspE subfamily.

It carries out the reaction 4-CDP-2-C-methyl-D-erythritol + ATP = 4-CDP-2-C-methyl-D-erythritol 2-phosphate + ADP + H(+). The protein operates within isoprenoid biosynthesis; isopentenyl diphosphate biosynthesis via DXP pathway; isopentenyl diphosphate from 1-deoxy-D-xylulose 5-phosphate: step 3/6. Functionally, catalyzes the phosphorylation of the position 2 hydroxy group of 4-diphosphocytidyl-2C-methyl-D-erythritol. The sequence is that of 4-diphosphocytidyl-2-C-methyl-D-erythritol kinase from Shewanella baltica (strain OS185).